The chain runs to 61 residues: Temporin-1Tb (61 aa).

The N-terminal stretch at 1-22 is a signal peptide; sequence MFTLKKSLLLLFFLGTINLSLC. A propeptide spanning residues 23–44 is cleaved from the precursor; sequence EEERNAEEERRDEPDERDVQVE. Leucine 59 is subject to Leucine amide.

This sequence belongs to the frog skin active peptide (FSAP) family. Temporin subfamily. As to quaternary structure, homo-oligomerizes in membranes as homodimers, homotrimers, or even homotetramers. Oligomerizes in presence of LPS. In Gram-positive bacterial mimetic membranes, the aggregation is weakly pronounced, and penetration proceeds more rapidly and is deeper than in Gram-negative bacterial mimetic membranes where aggregation is high. Homo-oligomerization is prevented by temporin-L. In terms of tissue distribution, expressed by the skin glands.

It is found in the secreted. It localises to the target cell membrane. The protein resides in the target cell. The protein localises to the target cell cytoplasm. Its function is as follows. Amphipathic alpha-helical antimicrobial peptide with potent activity against Gram-positive bacteria, weak activity against Gram-negative bacteria, and moderate activity against fungi. Mainly acts by causing membrane permeabilization, but is unable to forme pore-like openings. Is also able to penetrate eukaryotic cells (keratinocytes), and kill intracellular S.aureus (both wild-type and MRSA) without injuring host cells. Shows inhibitory effect on biofilm formation of Gram-positive bacteria, but not of Gram-negative bacteria. Shows antiviral activity against herpes simplex virus 1 (HSV-1) by disrupting the viral envelope. Also displays anti-leishmania activity by damaging parasite membrane. Does not show hemolytic activity. Acts synergistically with temporin-L that improves temporin-1Tb activity by preventing its self-association in lipopolysaccharides (LPS). In vitro, promotes cell migration and wound healing. The chain is Temporin-1Tb from Rana temporaria (European common frog).